The primary structure comprises 520 residues: GMP synthase [glutamine-hydrolyzing] (520 aa).

A Glutamine amidotransferase type-1 domain is found at 9 to 202 (SVLIVDFGSQ…IHNVAGIKGD (194 aa)). Catalysis depends on Cys-86, which acts as the Nucleophile. Active-site residues include His-176 and Glu-178. Positions 203–395 (WSMSAYRQKA…LGLPDSFIGR (193 aa)) constitute a GMPS ATP-PPase domain. Residue 230-236 (SGGVDSS) participates in ATP binding.

Homodimer.

It catalyses the reaction XMP + L-glutamine + ATP + H2O = GMP + L-glutamate + AMP + diphosphate + 2 H(+). It functions in the pathway purine metabolism; GMP biosynthesis; GMP from XMP (L-Gln route): step 1/1. In terms of biological role, catalyzes the synthesis of GMP from XMP. This chain is GMP synthase [glutamine-hydrolyzing], found in Rhizobium etli (strain ATCC 51251 / DSM 11541 / JCM 21823 / NBRC 15573 / CFN 42).